The chain runs to 356 residues: MTRPIQASLDLQVMKQNLAIVRRAAPEARVWSVVKANAYGHGIERVWSALGATDGFAMLNLEEAITLRERGWKGPILMLEGFFHAQDLEAYDTYRLTTCIHSNWQLKALQNARLNAPLDIYVKVNSGMNRLGFQPERAQTVWQQLRAMRNVGEMTLMSHFAQADHPEGIGEAMRRIALATEGLQCAYSLSNSAATLWHPQAHYDWVRPGIILYGASPSGQWRDIADTGLKPVMTLSSEIIGVQTLSAGERVGYGGGYSVTQEQRIGIVAAGYADGYPRHAPTGTPVLVDGIRTRTVGTVSMDMLAVDLTPCPQAGIGTPVELWGKEIKVDDVASAAGTLGYELLCAVAPRVPFVTT.

The Proton acceptor; specific for D-alanine role is filled by Lys-35. N6-(pyridoxal phosphate)lysine is present on Lys-35. Position 130 (Arg-130) interacts with substrate. Tyr-253 serves as the catalytic Proton acceptor; specific for L-alanine. Met-301 is a binding site for substrate.

The protein belongs to the alanine racemase family. As to quaternary structure, monomer. Pyridoxal 5'-phosphate serves as cofactor.

The enzyme catalyses L-alanine = D-alanine. With respect to regulation, inactivated by D- and L-beta-fluoroalanine, D- and L-beta-chloroalanine, and O-acetyl-D-serine. Functionally, isomerizes L-alanine to D-alanine which is then oxidized to pyruvate by DadA. The sequence is that of Alanine racemase, catabolic (dadX) from Salmonella typhimurium (strain LT2 / SGSC1412 / ATCC 700720).